Consider the following 373-residue polypeptide: Integrator complex subunit 15 (373 aa).

Belongs to the Integrator subunit 15 family. Belongs to the multiprotein complex Integrator, at least composed of IntS1, IntS2, IntS3, IntS4, omd/IntS5, IntS6, defl/IntS7, IntS8, IntS9, IntS10, IntS11, IntS12, asun/IntS13, IntS14 and IntS15. The core complex associates with protein phosphatase 2A subunits mts/PP2A and Pp2A-29B, to form the Integrator-PP2A (INTAC) complex.

It localises to the nucleus. Functionally, component of the integrator complex, a multiprotein complex that terminates RNA polymerase II (Pol II) transcription in the promoter-proximal region of genes. The integrator complex provides a quality checkpoint during transcription elongation by driving premature transcription termination of transcripts that are unfavorably configured for transcriptional elongation: the complex terminates transcription by (1) catalyzing dephosphorylation of the C-terminal domain (CTD) of Pol II subunit Rbp1 and Spt5, and (2) degrading the exiting nascent RNA transcript via endonuclease activity. The integrator complex is also involved in the 3'-end processing of the U7 snRNA, and also the spliceosomal snRNAs U1, U2, U4 and U5. The protein is Integrator complex subunit 15 of Drosophila melanogaster (Fruit fly).